A 397-amino-acid chain; its full sequence is Succinate--CoA ligase [ADP-forming] subunit beta (397 aa).

Positions 9 to 253 (KEILASYGVR…IREENPIEVE (245 aa)) constitute an ATP-grasp domain. ATP is bound by residues K50, 57-59 (GRG), V106, and E116. Mg(2+) contacts are provided by N208 and D222. Substrate is bound by residues N273 and 330 to 332 (GIV).

Belongs to the succinate/malate CoA ligase beta subunit family. As to quaternary structure, heterotetramer of two alpha and two beta subunits. Mg(2+) serves as cofactor.

The enzyme catalyses succinate + ATP + CoA = succinyl-CoA + ADP + phosphate. The catalysed reaction is GTP + succinate + CoA = succinyl-CoA + GDP + phosphate. It participates in carbohydrate metabolism; tricarboxylic acid cycle; succinate from succinyl-CoA (ligase route): step 1/1. Its function is as follows. Succinyl-CoA synthetase functions in the citric acid cycle (TCA), coupling the hydrolysis of succinyl-CoA to the synthesis of either ATP or GTP and thus represents the only step of substrate-level phosphorylation in the TCA. The beta subunit provides nucleotide specificity of the enzyme and binds the substrate succinate, while the binding sites for coenzyme A and phosphate are found in the alpha subunit. The protein is Succinate--CoA ligase [ADP-forming] subunit beta of Flavobacterium johnsoniae (strain ATCC 17061 / DSM 2064 / JCM 8514 / BCRC 14874 / CCUG 350202 / NBRC 14942 / NCIMB 11054 / UW101) (Cytophaga johnsonae).